The sequence spans 292 residues: Putative OX-2 membrane glycoprotein homolog (292 aa).

Residues 1 to 18 (MSPLMLRLLPLLCIIISA) form the signal peptide. In terms of domain architecture, Ig-like V-type spans 24-136 (PETSPSLVYE…TFTVDNEKTS (113 aa)). An intrachain disulfide couples Cys42 to Cys126. 4 N-linked (GlcNAc...) asparagine; by host glycosylation sites follow: Asn45, Asn57, Asn72, and Asn195. The region spanning 147–237 (PIVVLYFRYL…TNQKASALVT (91 aa)) is the Ig-like C2-type domain. A helical membrane pass occupies residues 263 to 283 (VFTWIVPLILILIISVMVLLI).

Its subcellular location is the host membrane. This chain is Putative OX-2 membrane glycoprotein homolog (U85), found in Human herpesvirus 6B (strain Z29) (HHV-6 variant B).